Here is a 358-residue protein sequence, read N- to C-terminus: Alpha-2-HS-glycoprotein (358 aa).

The signal sequence occupies residues 1 to 18 (MKFFVLFLCLVQLWGCHS). A Cystatin fetuin-A-type 1 domain is found at 27 to 133 (ERNPACDDPE…QFSVVFAKCE (107 aa)). Intrachain disulfides connect C32–C349, C89–C100, C114–C132, C146–C149, C208–C218, and C229–C246. The N-linked (GlcNAc...) asparagine glycan is linked to N99. S134 carries the post-translational modification Phosphoserine. T135 is subject to Phosphothreonine. S138 bears the Phosphoserine mark. A Cystatin fetuin-A-type 2 domain is found at 144–254 (KVCPQCPLLT…TCTVFPTQPV (111 aa)). 2 N-linked (GlcNAc...) asparagine glycosylation sites follow: N156 and N176. Residues 257–288 (LPQPDAASSANPPPAADPAVSPPSSPSVPVDS) form a disordered region. Residues 267-282 (NPPPAADPAVSPPSSP) are compositionally biased toward pro residues. Phosphoserine occurs at positions 318 and 320. The disordered stretch occupies residues 320 to 350 (SGEAFGPRQKPKVTHPGVASGVGPVPPPPCP).

It belongs to the fetuin family. Phosphorylated by FAM20C in the extracellular medium. As to expression, bone marrow.

The protein localises to the secreted. This chain is Alpha-2-HS-glycoprotein (AHSG), found in Cavia porcellus (Guinea pig).